The sequence spans 369 residues: Ribosomal RNA large subunit methyltransferase M (369 aa).

S-adenosyl-L-methionine-binding positions include Ser-198, 231 to 234 (APGG), Asp-250, Asp-270, and Asp-287. Lys-316 serves as the catalytic Proton acceptor.

This sequence belongs to the class I-like SAM-binding methyltransferase superfamily. RNA methyltransferase RlmE family. RlmM subfamily. In terms of assembly, monomer.

Its subcellular location is the cytoplasm. It carries out the reaction cytidine(2498) in 23S rRNA + S-adenosyl-L-methionine = 2'-O-methylcytidine(2498) in 23S rRNA + S-adenosyl-L-homocysteine + H(+). Its function is as follows. Catalyzes the 2'-O-methylation at nucleotide C2498 in 23S rRNA. This chain is Ribosomal RNA large subunit methyltransferase M, found in Idiomarina loihiensis (strain ATCC BAA-735 / DSM 15497 / L2-TR).